The sequence spans 410 residues: Histone-lysine N-methyltransferase SUV39H2 (410 aa).

A Chromo domain is found at 47 to 105 (YEVEYLCDYKVVKDMEYYLVKWKGWPDSTNTWEPLQNLKCPLLLQQFFNDKHNYLSQVK). In terms of domain architecture, Pre-SET spans 189–247 (FGCSCTDCFFEKCCPAEAGVLLAYNKNQQIKIPPGTPIYECNSRCQCGPDCPNRIVQKG). Residues C191, C193, C196, C201, C202, C229, C233, C235, and C239 each coordinate Zn(2+). The SET domain occupies 250-373 (YSLCIFRTSN…AGEELTFDYQ (124 aa)). Residues 261-263 (CGW), Y304, and 330-331 (NH) each bind S-adenosyl-L-methionine. C333 provides a ligand contact to Zn(2+). Phosphoserine occurs at positions 381, 384, and 388. The 17-residue stretch at 394–410 (ARTVCKCGAVTCRGYLN) folds into the Post-SET domain. The Zn(2+) site is built by C398, C400, and C405.

Belongs to the class V-like SAM-binding methyltransferase superfamily. Histone-lysine methyltransferase family. Suvar3-9 subfamily. Interacts with SMAD5. The large PER complex involved in the histone methylation is composed of at least PER2, CBX3, TRIM28, SUV39H1 and/or SUV39H2; CBX3 mediates the formation of the complex. Post-translationally, ubiquitinated by the DCX(DCAF13) E3 ubiquitin ligase complex, leading to its degradation.

It localises to the nucleus. The protein resides in the chromosome. It is found in the centromere. It carries out the reaction L-lysyl(9)-[histone H3] + 3 S-adenosyl-L-methionine = N(6),N(6),N(6)-trimethyl-L-lysyl(9)-[histone H3] + 3 S-adenosyl-L-homocysteine + 3 H(+). Functionally, histone methyltransferase that specifically trimethylates 'Lys-9' of histone H3 using monomethylated H3 'Lys-9' as substrate. H3 'Lys-9' trimethylation represents a specific tag for epigenetic transcriptional repression by recruiting HP1 (CBX1, CBX3 and/or CBX5) proteins to methylated histones. Mainly functions in heterochromatin regions, thereby playing a central role in the establishment of constitutive heterochromatin at pericentric and telomere regions. H3 'Lys-9' trimethylation is also required to direct DNA methylation at pericentric repeats. SUV39H1 is targeted to histone H3 via its interaction with RB1 and is involved in many processes, such as cell cycle regulation, transcriptional repression and regulation of telomere length. May participate in regulation of higher-order chromatin organization during spermatogenesis. Recruited by the large PER complex to the E-box elements of the circadian target genes such as PER2 itself or PER1, contributes to the conversion of local chromatin to a heterochromatin-like repressive state through H3 'Lys-9' trimethylation. The sequence is that of Histone-lysine N-methyltransferase SUV39H2 (SUV39H2) from Bos taurus (Bovine).